A 549-amino-acid polypeptide reads, in one-letter code: Cytoplasmic trehalase (549 aa).

Substrate is bound by residues Arg168, 175–176 (WD), Asn212, 221–223 (RSQ), 292–294 (RDE), and Gly324. Residues Asp326 and Glu509 each act as proton donor/acceptor in the active site. Glu525 serves as a coordination point for substrate.

It belongs to the glycosyl hydrolase 37 family. Monomer.

It is found in the cytoplasm. The catalysed reaction is alpha,alpha-trehalose + H2O = alpha-D-glucose + beta-D-glucose. Its pathway is glycan degradation; trehalose degradation; D-glucose from alpha,alpha-trehalose: step 1/1. Its function is as follows. Hydrolyzes trehalose to glucose. Could be involved, in cells returning to low osmolarity conditions, in the utilization of the accumulated cytoplasmic trehalose, which was synthesized in response to high osmolarity. The polypeptide is Cytoplasmic trehalase (Salmonella typhi).